We begin with the raw amino-acid sequence, 237 residues long: 1-(5-phosphoribosyl)-5-[(5-phosphoribosylamino)methylideneamino] imidazole-4-carboxamide isomerase (237 aa).

D8 (proton acceptor) is an active-site residue. D129 acts as the Proton donor in catalysis.

The protein belongs to the HisA/HisF family.

The protein resides in the cytoplasm. The enzyme catalyses 1-(5-phospho-beta-D-ribosyl)-5-[(5-phospho-beta-D-ribosylamino)methylideneamino]imidazole-4-carboxamide = 5-[(5-phospho-1-deoxy-D-ribulos-1-ylimino)methylamino]-1-(5-phospho-beta-D-ribosyl)imidazole-4-carboxamide. It participates in amino-acid biosynthesis; L-histidine biosynthesis; L-histidine from 5-phospho-alpha-D-ribose 1-diphosphate: step 4/9. This Roseiflexus castenholzii (strain DSM 13941 / HLO8) protein is 1-(5-phosphoribosyl)-5-[(5-phosphoribosylamino)methylideneamino] imidazole-4-carboxamide isomerase.